Reading from the N-terminus, the 192-residue chain is MNFSAILLLALGLAMDATAVAAARGLSVPAIRARHVLLVAGFFGGAQALMPVIGWLLGARIGPRVQAWDHWIAFVLLAFIGGKMLWEARGDGGDDGGEGETTADPFALSAMFVLAIATSIDALAVGITLPMLNAPFAISVVTIGVVTALLSAAGLFAGRRFGALLGKRLDLAGGVVLIGLGFKILLEHLVLS.

Transmembrane regions (helical) follow at residues 3–23 (FSAI…VAAA), 36–56 (VLLV…IGWL), 65–85 (VQAW…GKML), 112–132 (FVLA…LPML), 136–156 (FAIS…AGLF), and 171–191 (LAGG…HLVL).

It belongs to the MntP (TC 9.B.29) family.

It localises to the cell inner membrane. Functionally, probably functions as a manganese efflux pump. This is Putative manganese efflux pump MntP from Sorangium cellulosum (strain So ce56) (Polyangium cellulosum (strain So ce56)).